Reading from the N-terminus, the 312-residue chain is Aspartate carbamoyltransferase catalytic subunit (312 aa).

Residues Arg-58 and Thr-59 each contribute to the carbamoyl phosphate site. Lys-86 contacts L-aspartate. Positions 108, 136, and 139 each coordinate carbamoyl phosphate. L-aspartate contacts are provided by Arg-169 and Arg-223. Carbamoyl phosphate-binding residues include Gly-264 and Pro-265.

The protein belongs to the aspartate/ornithine carbamoyltransferase superfamily. ATCase family. As to quaternary structure, heterododecamer (2C3:3R2) of six catalytic PyrB chains organized as two trimers (C3), and six regulatory PyrI chains organized as three dimers (R2).

The catalysed reaction is carbamoyl phosphate + L-aspartate = N-carbamoyl-L-aspartate + phosphate + H(+). It participates in pyrimidine metabolism; UMP biosynthesis via de novo pathway; (S)-dihydroorotate from bicarbonate: step 2/3. In terms of biological role, catalyzes the condensation of carbamoyl phosphate and aspartate to form carbamoyl aspartate and inorganic phosphate, the committed step in the de novo pyrimidine nucleotide biosynthesis pathway. In Desulforamulus reducens (strain ATCC BAA-1160 / DSM 100696 / MI-1) (Desulfotomaculum reducens), this protein is Aspartate carbamoyltransferase catalytic subunit.